We begin with the raw amino-acid sequence, 83 residues long: MLRNLLALRQIGQRTISTASRRHFKNKVPEKQKLFQEDDEIPLYLKGGVADALLYRATMILTVGGTAYAIYELAVASFPKKQE.

The N-terminal 23 residues, 1–23 (MLRNLLALRQIGQRTISTASRRH), are a transit peptide targeting the mitochondrion. Topologically, residues 24-48 (FKNKVPEKQKLFQEDDEIPLYLKGG) are mitochondrial matrix. Position 33 is an N6-acetyllysine (Lys-33). A helical membrane pass occupies residues 49 to 77 (VADALLYRATMILTVGGTAYAIYELAVAS). Topologically, residues 78 to 83 (FPKKQE) are mitochondrial intermembrane.

Belongs to the cytochrome c oxidase VIIa family. Component of the cytochrome c oxidase (complex IV, CIV), a multisubunit enzyme composed of 14 subunits. The complex is composed of a catalytic core of 3 subunits MT-CO1, MT-CO2 and MT-CO3, encoded in the mitochondrial DNA, and 11 supernumerary subunits COX4I1 (or COX4I2), COX5A, COX5B, COX6A1 (or COX6A2), COX6B1 (or COX6B2), COX6C, COX7A2 (or COX7A1), COX7B, COX7C, COX8A and NDUFA4, which are encoded in the nuclear genome. The complex exists as a monomer or a dimer and forms supercomplexes (SCs) in the inner mitochondrial membrane with NADH-ubiquinone oxidoreductase (complex I, CI) and ubiquinol-cytochrome c oxidoreductase (cytochrome b-c1 complex, complex III, CIII), resulting in different assemblies (supercomplex SCI(1)III(2)IV(1) and megacomplex MCI(2)III(2)IV(2)). Interacts with PET100.

The protein localises to the mitochondrion inner membrane. It functions in the pathway energy metabolism; oxidative phosphorylation. In terms of biological role, component of the cytochrome c oxidase, the last enzyme in the mitochondrial electron transport chain which drives oxidative phosphorylation. The respiratory chain contains 3 multisubunit complexes succinate dehydrogenase (complex II, CII), ubiquinol-cytochrome c oxidoreductase (cytochrome b-c1 complex, complex III, CIII) and cytochrome c oxidase (complex IV, CIV), that cooperate to transfer electrons derived from NADH and succinate to molecular oxygen, creating an electrochemical gradient over the inner membrane that drives transmembrane transport and the ATP synthase. Cytochrome c oxidase is the component of the respiratory chain that catalyzes the reduction of oxygen to water. Electrons originating from reduced cytochrome c in the intermembrane space (IMS) are transferred via the dinuclear copper A center (CU(A)) of subunit 2 and heme A of subunit 1 to the active site in subunit 1, a binuclear center (BNC) formed by heme A3 and copper B (CU(B)). The BNC reduces molecular oxygen to 2 water molecules using 4 electrons from cytochrome c in the IMS and 4 protons from the mitochondrial matrix. The chain is Cytochrome c oxidase subunit 7A2, mitochondrial (COX7A2) from Homo sapiens (Human).